The chain runs to 187 residues: CRISPR system Cmr subunit Cmr1-2 (187 aa).

This sequence belongs to the CRISPR system Cmr1 family. Part of the type III-B Cmr ribonucleoprotein (RNP) complex. This is an elongated RNP with Cmr2 and Cmr3 as the base, with Cmr4 and Cmr5 forming a helical core along the mature crRNA (39 or 45 nt in length), while the complex is capped by Cmr6 and Cmr1. The 5' end of the crRNA is bound to Cmr2 and Cmr3, while Cmr6 and a Cmr1 subunit (Cmr1-1 or Cmr1-2) cap the 3' end of the crRNA. The target RNA lies antiparallel to the crRNA, with its 5' end near Cmr1 and Cmr6 and its 3' end near Cmr2 and Cmr3; major target cleavage occurs nears the junction of Cmr1/Cmr6 and Cmr4/Cmr, with minor cleavage occurring at 6 nt intervals which coincide with the proposed spacing of Cmr4 subunits.

The protein resides in the cytoplasm. In terms of biological role, CRISPR (clustered regularly interspaced short palindromic repeat), is an adaptive immune system that provides protection against mobile genetic elements (viruses, transposable elements and conjugative plasmids). CRISPR clusters contain sequences complementary to antecedent mobile elements and target invading nucleic acids. CRISPR clusters are transcribed and processed into CRISPR RNA (crRNA), formerly called psiRNA (prokaryotic silencing) in this organism. Part of the Cmr ribonucleoprotein complex which has divalent cation-dependent endoribonuclease activity specific for ssRNA complementary to the crRNA (target RNA), generating 5' hydroxy- and 3' phosphate or 2'-3' cyclic phosphate termini. Cmr4 is probably the subunit that cleaves target RNA. Cmr complex does not cleave ssDNA complementary to the crRNA. Cleavage of invading RNA is guided by the crRNA; substrate cleavage occurs a fixed distance (14 nt) from the 3' end of the crRNA. In vitro reconstitution shows Cmr1-2 and Cmr5 are not absolutely necessary for target cleavage. In Pyrococcus furiosus (strain ATCC 43587 / DSM 3638 / JCM 8422 / Vc1), this protein is CRISPR system Cmr subunit Cmr1-2.